Reading from the N-terminus, the 215-residue chain is 3-isopropylmalate dehydratase small subunit (215 aa).

This sequence belongs to the LeuD family. LeuD type 1 subfamily. Heterodimer of LeuC and LeuD.

The catalysed reaction is (2R,3S)-3-isopropylmalate = (2S)-2-isopropylmalate. Its pathway is amino-acid biosynthesis; L-leucine biosynthesis; L-leucine from 3-methyl-2-oxobutanoate: step 2/4. Its function is as follows. Catalyzes the isomerization between 2-isopropylmalate and 3-isopropylmalate, via the formation of 2-isopropylmaleate. The protein is 3-isopropylmalate dehydratase small subunit of Leptothrix cholodnii (strain ATCC 51168 / LMG 8142 / SP-6) (Leptothrix discophora (strain SP-6)).